Reading from the N-terminus, the 232-residue chain is Chalcone synthase (232 aa).

Residue cysteine 7 is part of the active site.

This sequence belongs to the thiolase-like superfamily. Chalcone/stilbene synthases family.

The enzyme catalyses (E)-4-coumaroyl-CoA + 3 malonyl-CoA + 3 H(+) = 2',4,4',6'-tetrahydroxychalcone + 3 CO2 + 4 CoA. Its pathway is secondary metabolite biosynthesis; flavonoid biosynthesis. In terms of biological role, the primary product of this enzyme is 4,2',4',6'-tetrahydroxychalcone (also termed naringenin-chalcone or chalcone) which can under specific conditions spontaneously isomerize into naringenin. This chain is Chalcone synthase (CHS), found in Malus domestica (Apple).